The primary structure comprises 864 residues: N-alpha-acetyltransferase 16, NatA auxiliary subunit (864 aa).

TPR repeat units lie at residues 46-79 (GETLAMKGLILNCLGKREEAYEFVRKGLRSDVRS), 80-113 (HVCWHVYGLLQRSDKKYDEAIKCYRNALKLDKDN), 148-184 (RASWIGYAIAYHLLKDYDTALKLLEEFRQTQQVPPNK), 224-257 (LLVEEIKGEMLLKLGRLKEASEVFRNLIDWNAEN), 374-407 (IWVQYFLAQHYDKLGQYFLALEYINAVIASTPTL), 408-441 (IELFYMKAKIYKHMGNLKEAAQWMDEAQSLDTAD), and 485-514 (MWFETECISAYQRLGRYGDALKKCHEVERH). The disordered stretch occupies residues 594-646 (KMLSKQRRAQKKAKVEEERKHTERERQQKNQKKKREEEEEVTSGHKEELIPEK). The span at 595–605 (MLSKQRRAQKK) shows a compositional bias: basic residues. Basic and acidic residues-rich tracts occupy residues 606-621 (AKVEEERKHTERERQQ) and 635-646 (TSGHKEELIPEK).

Component of the N-terminal acetyltransferase A (NatA) complex composed of NAA10 and NAA16. As to expression, highest levels in the kidney and testes. Moderate expression in the liver, thymus and skin.

Auxillary subunit of the N-terminal acetyltransferase A (NatA) complex which displays alpha (N-terminal) acetyltransferase activity. This chain is N-alpha-acetyltransferase 16, NatA auxiliary subunit (Naa16), found in Mus musculus (Mouse).